We begin with the raw amino-acid sequence, 311 residues long: tRNA-cytidine(32) 2-sulfurtransferase (311 aa).

The PP-loop motif motif lies at 47–52; that stretch reads SGGKDS. [4Fe-4S] cluster contacts are provided by cysteine 122, cysteine 125, and cysteine 213.

This sequence belongs to the TtcA family. In terms of assembly, homodimer. Requires Mg(2+) as cofactor. It depends on [4Fe-4S] cluster as a cofactor.

The protein resides in the cytoplasm. The enzyme catalyses cytidine(32) in tRNA + S-sulfanyl-L-cysteinyl-[cysteine desulfurase] + AH2 + ATP = 2-thiocytidine(32) in tRNA + L-cysteinyl-[cysteine desulfurase] + A + AMP + diphosphate + H(+). Its pathway is tRNA modification. Functionally, catalyzes the ATP-dependent 2-thiolation of cytidine in position 32 of tRNA, to form 2-thiocytidine (s(2)C32). The sulfur atoms are provided by the cysteine/cysteine desulfurase (IscS) system. This chain is tRNA-cytidine(32) 2-sulfurtransferase, found in Escherichia coli (strain 55989 / EAEC).